We begin with the raw amino-acid sequence, 124 residues long: Small ribosomal subunit protein uS13 (124 aa).

A disordered region spans residues 95–124 (GLPVRGQRTKTNARTRKGPKRTIAGKKKAK).

It belongs to the universal ribosomal protein uS13 family. In terms of assembly, part of the 30S ribosomal subunit. Forms a loose heterodimer with protein S19. Forms two bridges to the 50S subunit in the 70S ribosome.

Located at the top of the head of the 30S subunit, it contacts several helices of the 16S rRNA. In the 70S ribosome it contacts the 23S rRNA (bridge B1a) and protein L5 of the 50S subunit (bridge B1b), connecting the 2 subunits; these bridges are implicated in subunit movement. Contacts the tRNAs in the A and P-sites. This Rhodococcus jostii (strain RHA1) protein is Small ribosomal subunit protein uS13.